Reading from the N-terminus, the 550-residue chain is Glucose-6-phosphate isomerase 2 (550 aa).

The active-site Proton donor is E359. Active-site residues include H390 and K514.

Belongs to the GPI family.

It is found in the cytoplasm. The enzyme catalyses alpha-D-glucose 6-phosphate = beta-D-fructose 6-phosphate. It participates in carbohydrate biosynthesis; gluconeogenesis. Its pathway is carbohydrate degradation; glycolysis; D-glyceraldehyde 3-phosphate and glycerone phosphate from D-glucose: step 2/4. Its function is as follows. Catalyzes the reversible isomerization of glucose-6-phosphate to fructose-6-phosphate. This chain is Glucose-6-phosphate isomerase 2, found in Streptomyces avermitilis (strain ATCC 31267 / DSM 46492 / JCM 5070 / NBRC 14893 / NCIMB 12804 / NRRL 8165 / MA-4680).